Here is a 361-residue protein sequence, read N- to C-terminus: DNA replication and repair protein RecF (361 aa).

Position 30 to 37 (30 to 37 (GANGSGKT)) interacts with ATP.

Belongs to the RecF family.

The protein resides in the cytoplasm. Its function is as follows. The RecF protein is involved in DNA metabolism; it is required for DNA replication and normal SOS inducibility. RecF binds preferentially to single-stranded, linear DNA. It also seems to bind ATP. The protein is DNA replication and repair protein RecF of Glaesserella parasuis serovar 5 (strain SH0165) (Haemophilus parasuis).